A 222-amino-acid polypeptide reads, in one-letter code: Extracellular protein ARB_03106 (222 aa).

A signal peptide spans 1-18 (MRLHSVLAVATAVGCAVA). Asn-113 and Asn-126 each carry an N-linked (GlcNAc...) asparagine glycan.

It localises to the secreted. This is Extracellular protein ARB_03106 from Arthroderma benhamiae (strain ATCC MYA-4681 / CBS 112371) (Trichophyton mentagrophytes).